Consider the following 238-residue polypeptide: Probable transcriptional regulatory protein YeeN (238 aa).

It belongs to the TACO1 family. YeeN subfamily.

The protein localises to the cytoplasm. This is Probable transcriptional regulatory protein YeeN from Escherichia coli (strain UTI89 / UPEC).